A 187-amino-acid polypeptide reads, in one-letter code: Resolvase OPG149 (187 aa).

This sequence belongs to the RuvC family. Poxviruses-type subfamily. It depends on Mg(2+) as a cofactor.

Functionally, plays a role in DNA replication by cleaving viral DNA concatamers to yield unit-length viral genomes. The concatamer junctions contain inverted repeat sequences that can be extruded as cruciforms, yielding Holliday junctions that A22 protein cleaves. The chain is Resolvase OPG149 (OPG149) from Vaccinia virus (strain Western Reserve) (VACV).